The chain runs to 229 residues: Flagellar L-ring protein (229 aa).

Positions 1–23 (MLSRLGARALVCLAGVAMLAASG) are cleaved as a signal peptide. A lipid anchor (N-palmitoyl cysteine) is attached at cysteine 24. Cysteine 24 carries the S-diacylglycerol cysteine lipid modification.

The protein belongs to the FlgH family. In terms of assembly, the basal body constitutes a major portion of the flagellar organelle and consists of four rings (L,P,S, and M) mounted on a central rod.

The protein localises to the cell outer membrane. It localises to the bacterial flagellum basal body. Functionally, assembles around the rod to form the L-ring and probably protects the motor/basal body from shearing forces during rotation. This chain is Flagellar L-ring protein, found in Cupriavidus taiwanensis (strain DSM 17343 / BCRC 17206 / CCUG 44338 / CIP 107171 / LMG 19424 / R1) (Ralstonia taiwanensis (strain LMG 19424)).